A 440-amino-acid polypeptide reads, in one-letter code: Transposon Ty1-JR2 Gag polyprotein (440 aa).

Low complexity predominate over residues 1 to 16 (MESQQLSQHSHISHGS). 3 disordered regions span residues 1–93 (MESQ…MMTQ), 126–173 (PQSQ…RPPP), and 352–440 (GSRN…PETY). Polar residues-rich tracts occupy residues 48–60 (TKANSQQTTTPAS), 71–93 (SPQTAQSHSPQNGPYPQQCMMTQ), and 127–152 (QSQFPQYPSSVGTPLSTPSPESGNTF). Residues 153–165 (TDSSSADSDMTST) show a composition bias toward low complexity. The segment at 299 to 401 (NNGIHINNKV…NSKSKTARAH (103 aa)) is RNA-binding. Over residues 402–418 (NVSTSNNSPSTDNDSIS) the composition is skewed to low complexity. Ser416 is modified (phosphoserine). Residues 419–428 (KSTTEPIQLN) show a composition bias toward polar residues. Basic and acidic residues predominate over residues 429–440 (NKHDLHLRPETY).

Homotrimer.

The protein resides in the cytoplasm. In terms of biological role, capsid protein (CA) is the structural component of the virus-like particle (VLP), forming the shell that encapsulates the retrotransposons dimeric RNA genome. The particles are assembled from trimer-clustered units and there are holes in the capsid shells that allow for the diffusion of macromolecules. CA also has nucleocapsid-like chaperone activity, promoting primer tRNA(i)-Met annealing to the multipartite primer-binding site (PBS), dimerization of Ty1 RNA and initiation of reverse transcription. This is Transposon Ty1-JR2 Gag polyprotein (TY1A-JR2) from Saccharomyces cerevisiae (strain ATCC 204508 / S288c) (Baker's yeast).